The chain runs to 95 residues: Co-chaperonin GroES (95 aa).

It belongs to the GroES chaperonin family. Heptamer of 7 subunits arranged in a ring. Interacts with the chaperonin GroEL.

The protein resides in the cytoplasm. In terms of biological role, together with the chaperonin GroEL, plays an essential role in assisting protein folding. The GroEL-GroES system forms a nano-cage that allows encapsulation of the non-native substrate proteins and provides a physical environment optimized to promote and accelerate protein folding. GroES binds to the apical surface of the GroEL ring, thereby capping the opening of the GroEL channel. In Nitratidesulfovibrio vulgaris (strain ATCC 29579 / DSM 644 / CCUG 34227 / NCIMB 8303 / VKM B-1760 / Hildenborough) (Desulfovibrio vulgaris), this protein is Co-chaperonin GroES.